We begin with the raw amino-acid sequence, 270 residues long: MAAPGEALTPSGYITHHLTNLSTYKLGLVAEESSFWNVHIDSLFFSWFTGLIFLGIFYAVARKTTAGVPGKLQCAVEMIVEFVATNVKDTFHGRNPLIAPLALTIFCWVFLMNLMDLVPIDFLPYPAEHWLGIPYLKVVPSADVNITMAMALGVFALMIYYSIKVKGLGGFARELALHPFNHWTMIPFNLLIEVVSLLAKPLSLGMRLFGNMFAGEVVFILCAAMLPWYLQWMGSLPWAIFHILVILIQAFVFMMLTIVYMSMAHEDSDH.

5 helical membrane passes run 40 to 60 (IDSL…FYAV), 98 to 118 (IAPL…MDLV), 143 to 163 (DVNI…YYSI), 208 to 228 (LFGN…MLPW), and 239 to 259 (AIFH…LTIV).

This sequence belongs to the ATPase A chain family. F-type ATPases have 2 components, CF(1) - the catalytic core - and CF(0) - the membrane proton channel. CF(1) has five subunits: alpha(3), beta(3), gamma(1), delta(1), epsilon(1). CF(0) has three main subunits: a(1), b(2) and c(9-12). The alpha and beta chains form an alternating ring which encloses part of the gamma chain. CF(1) is attached to CF(0) by a central stalk formed by the gamma and epsilon chains, while a peripheral stalk is formed by the delta and b chains.

The protein localises to the cell inner membrane. In terms of biological role, key component of the proton channel; it plays a direct role in the translocation of protons across the membrane. This is ATP synthase subunit a from Vibrio vulnificus (strain CMCP6).